Reading from the N-terminus, the 646-residue chain is FAD-binding monooxygenase prhK (646 aa).

Asn46 carries N-linked (GlcNAc...) asparagine glycosylation. The helical transmembrane segment at 80 to 97 (IIIIGAGFGGLLFAVRLI) threads the bilayer. Residues 119-122 (TWYW), 131-132 (DT), and Tyr137 each bind FAD. 129–131 (MCD) is a binding site for NADP(+). NADP(+)-binding positions include 275-281 (TGATAIQ) and 298-299 (RT). N-linked (GlcNAc...) asparagine glycans are attached at residues Asn429, Asn483, and Asn529.

Belongs to the FAD-binding monooxygenase family. It depends on FAD as a cofactor.

It is found in the membrane. It carries out the reaction preaustinoid A + AH2 + O2 = preaustinoid A1 + A + H2O. It participates in secondary metabolite biosynthesis; terpenoid biosynthesis. Functionally, FAD-binding monooxygenase; part of the gene cluster that mediates the biosynthesis of paraherquonin, a meroterpenoid with a unique, highly congested hexacyclic molecular architecture. The first step of the pathway is the synthesis of 3,5-dimethylorsellinic acid (DMOA) by the polyketide synthase prhL. Synthesis of DMOA is followed by farnesylation by the prenyltransferase prhE, methylesterification by the methyl-transferase prhM, epoxidation of the prenyl chain by the flavin-dependent monooxygenase prhF, and cyclization of the farnesyl moiety by the terpene cyclase prhH, to yield the tetracyclic intermediate, protoaustinoid A. The short chain dehydrogenase prhI then oxidizes the C-3 alcohol group of the terpene cyclase product to transform protoaustinoid A into protoaustinoid B. The FAD-binding monooxygenase prhJ catalyzes the oxidation of protoaustinoid B into preaustinoid A which is further oxidized into preaustinoid A1 by FAD-binding monooxygenase phrK. Finally, prhA leads to berkeleydione via the berkeleyone B intermediate. PrhA is a multifunctional dioxygenase that first desaturates at C5-C6 to form berkeleyone B, followed by rearrangement of the A/B-ring to form the cycloheptadiene moiety in berkeleydione. Berkeleydione serves as the key intermediate for the biosynthesis of paraherquonin as well as many other meroterpenoids. The cytochrome P450 monooxygenases prhB, prhD, and prhN, as well as the isomerase prhC, are probably involved in the late stage of paraherquonin biosynthesis, after the production of berkeleydione. Especially prhC might be a multifunctional enzyme that catalyzes the D-ring expansion via intramolecular methoxy rearrangement, as well as the hydrolysis of the expanded D-ring. The chain is FAD-binding monooxygenase prhK from Penicillium brasilianum.